Reading from the N-terminus, the 226-residue chain is MGIIKFDKVTQVFGDLCVLRDITVQLTEKRIAVIGANGSGKSTFVRLINGLQLPSNGFVSVDGLDTKRDAKAVKRKVGFVFQNPDNQIVLPLVEEDLSFGLKNLNLSKDEIKKRVDEILQRYDLQAFKNHAVHLLSGGQKQLVAISSVVAMKPDYIVFDEPTTLLDLRNKRRVTQVIEELPQTAIVVSHDLEFLKNFDRILVFDKGEIAIDDVPLVAIKEYIRRMS.

Residues 4–225 (IKFDKVTQVF…VAIKEYIRRM (222 aa)) enclose the ABC transporter domain. 35–42 (GANGSGKS) contributes to the ATP binding site.

This sequence belongs to the ABC transporter superfamily.

The protein resides in the cell inner membrane. In terms of biological role, probably part of an ABC transporter complex. Responsible for energy coupling to the transport system. In Bartonella quintana (strain Toulouse) (Rochalimaea quintana), this protein is Putative ABC transporter ATP-binding protein BQ02700.